A 184-amino-acid chain; its full sequence is ADP-ribosylation factor-like protein 3 (184 aa).

Residue Gly-2 is the site of N-myristoyl glycine attachment. Residues 24 to 31, 68 to 72, and 127 to 130 contribute to the GTP site; these read GLDNAGKT, DIGGQ, and NKQD.

This sequence belongs to the small GTPase superfamily. Arf family.

The protein resides in the golgi apparatus. In terms of biological role, GTP-binding protein that may be involved in protein trafficking; may modulate vesicle budding and uncoating within the Golgi apparatus. This Caenorhabditis elegans protein is ADP-ribosylation factor-like protein 3 (arl-3).